Consider the following 135-residue polypeptide: Protein NrdI (135 aa).

Belongs to the NrdI family.

Its function is as follows. Probably involved in ribonucleotide reductase function. In Rhizobium johnstonii (strain DSM 114642 / LMG 32736 / 3841) (Rhizobium leguminosarum bv. viciae), this protein is Protein NrdI.